We begin with the raw amino-acid sequence, 328 residues long: Acyl-CoA wax alcohol acyltransferase 1 (328 aa).

A run of 2 helical transmembrane segments spans residues 12 to 32 and 34 to 53; these read SLSL…VQPL and ICLL…VWLL.

The protein belongs to the diacylglycerol acyltransferase family.

The protein resides in the endoplasmic reticulum membrane. It carries out the reaction a long chain fatty alcohol + a fatty acyl-CoA = a wax ester + CoA. The enzyme catalyses 1,2-di-(9Z-octadecenoyl)-sn-glycerol + (9Z)-octadecenoyl-CoA = 1,2,3-tri-(9Z-octadecenoyl)-glycerol + CoA. It catalyses the reaction hexadecan-1-ol + (9Z)-octadecenoyl-CoA = hexadecanyl (9Z)-octadecenoate + CoA. The catalysed reaction is decan-1-ol + (9Z)-octadecenoyl-CoA = 1-O-decyl-(9Z)-octadecenoate + CoA. It carries out the reaction (9Z)-hexadecen-1-ol + (9Z)-octadecenoyl-CoA = 1-O-(9Z)-hexadecenyl (9Z)-octadecenoate + CoA. The enzyme catalyses octadecan-1-ol + (9Z)-octadecenoyl-CoA = 1-O-octadecyl (9Z)-octadecenoate + CoA. It catalyses the reaction (9Z)-octadecen-1-ol + (9Z)-octadecenoyl-CoA = 1-O-(9Z)-octadecenyl (9Z)-octadecenoate + CoA. The catalysed reaction is hexadecan-1-ol + hexadecanoyl-CoA = hexadecanyl hexadecanoate + CoA. It carries out the reaction hexadecan-1-ol + (9Z)-hexadecenoyl-CoA = 1-O-hexadecyl (9Z)-hexadecenoate + CoA. The enzyme catalyses hexadecan-1-ol + octadecanoyl-CoA = hexadecanyl octadecanoate + CoA. It catalyses the reaction eicosan-1-ol + (9Z)-octadecenoyl-CoA = 1-O-eicosanyl (9Z)-octadecenoate + CoA. Its function is as follows. Acyltransferase that catalyzes the formation of ester bonds between fatty alcohols and fatty acyl-CoAs to form wax monoesters. Shows a strong preference for decyl alcohol (C10), with less activity towards C16 and C18 alcohols. Shows a strong preference for saturated acyl-CoAs. In Mus musculus (Mouse), this protein is Acyl-CoA wax alcohol acyltransferase 1 (Awat1).